The sequence spans 158 residues: NAD(P)H-quinone oxidoreductase subunit J, chloroplastic (158 aa).

This sequence belongs to the complex I 30 kDa subunit family. As to quaternary structure, NDH is composed of at least 16 different subunits, 5 of which are encoded in the nucleus.

The protein resides in the plastid. The protein localises to the chloroplast thylakoid membrane. The enzyme catalyses a plastoquinone + NADH + (n+1) H(+)(in) = a plastoquinol + NAD(+) + n H(+)(out). It catalyses the reaction a plastoquinone + NADPH + (n+1) H(+)(in) = a plastoquinol + NADP(+) + n H(+)(out). In terms of biological role, NDH shuttles electrons from NAD(P)H:plastoquinone, via FMN and iron-sulfur (Fe-S) centers, to quinones in the photosynthetic chain and possibly in a chloroplast respiratory chain. The immediate electron acceptor for the enzyme in this species is believed to be plastoquinone. Couples the redox reaction to proton translocation, and thus conserves the redox energy in a proton gradient. The polypeptide is NAD(P)H-quinone oxidoreductase subunit J, chloroplastic (Pelargonium hortorum (Common geranium)).